Here is a 409-residue protein sequence, read N- to C-terminus: uncharacterized protein (409 aa).

The first 29 residues, 1-29 (MARSRCVHRVVHQAACIGVIGLSTSALTT), serve as a signal peptide directing secretion. A lipid anchor (N-palmitoyl cysteine) is attached at C30. Residue C30 is the site of S-diacylglycerol cysteine attachment.

It belongs to the TP013X lipoprotein family.

It is found in the cell membrane. This is an uncharacterized protein from Treponema pallidum (strain Nichols).